Reading from the N-terminus, the 683-residue chain is Cytochrome P450 monooxygenase htyF (683 aa).

A helical transmembrane segment spans residues 8–28 (PALLAASVVLAVSLVSYVIQL). The N-linked (GlcNAc...) asparagine glycan is linked to Asn29. Cys481 provides a ligand contact to heme. Asn581 carries N-linked (GlcNAc...) asparagine glycosylation. A helical transmembrane segment spans residues 588 to 608 (LYVFVVLVACVAALFIGIGIY).

Belongs to the cytochrome P450 family. It depends on heme as a cofactor.

The protein localises to the membrane. It participates in antifungal biosynthesis. Cytochrome P450 monooxygenase; part of the gene cluster that mediates the de novo generation of L-homotyrosine from acetyl-CoA and 4-hydroxyphenyl-pyruvate. L-homotyrosine is a building block of echinocandin B, a fungal lipidated cyclic hexapeptide that acts as an antifungal agent. L-homotyrosine 4-hydroxyphenyl-pyruvate first undergoes an aldol-type condensation by htyA with the C-2 of acetyl-CoA followed by the release of CoA to form 2-(4-hydroxybenzyl)-malate. This is followed by isomerization of 2-(4-hydroxy-benzyl)-malate to 3-(4-hydroxybenzyl)-malate by htyD. Thereafter, 3-(4-hydroxybenzyl)-malate undergoes decarboxylation and oxidation to form 2-oxo-4-(4-hydroxybenzyl)butanoic acid, coupled to reduction of NAD(+) to NADH by htyC. The product then undergoes transamination catalyzed by htyB to form L-homotyrosine. In Aspergillus rugulosus (Emericella rugulosa), this protein is Cytochrome P450 monooxygenase htyF.